Reading from the N-terminus, the 352-residue chain is Methylthioribose-1-phosphate isomerase (352 aa).

Substrate contacts are provided by residues 55–57 (RGA), R98, and Q201. Catalysis depends on D242, which acts as the Proton donor. 252-253 (NK) is a binding site for substrate.

It belongs to the eIF-2B alpha/beta/delta subunits family. MtnA subfamily.

It catalyses the reaction 5-(methylsulfanyl)-alpha-D-ribose 1-phosphate = 5-(methylsulfanyl)-D-ribulose 1-phosphate. It functions in the pathway amino-acid biosynthesis; L-methionine biosynthesis via salvage pathway; L-methionine from S-methyl-5-thio-alpha-D-ribose 1-phosphate: step 1/6. Functionally, catalyzes the interconversion of methylthioribose-1-phosphate (MTR-1-P) into methylthioribulose-1-phosphate (MTRu-1-P). The polypeptide is Methylthioribose-1-phosphate isomerase (Methylococcus capsulatus (strain ATCC 33009 / NCIMB 11132 / Bath)).